We begin with the raw amino-acid sequence, 426 residues long: Dihydroorotase (426 aa).

Positions 55 and 57 each coordinate Zn(2+). Residues 57-59 and asparagine 89 each bind substrate; that span reads HLR. Zn(2+)-binding residues include aspartate 147, histidine 174, histidine 233, and aspartate 306. The active site involves aspartate 306. Substrate-binding positions include histidine 310 and 324–325; that span reads FG.

It belongs to the metallo-dependent hydrolases superfamily. DHOase family. Class I DHOase subfamily. It depends on Zn(2+) as a cofactor.

The enzyme catalyses (S)-dihydroorotate + H2O = N-carbamoyl-L-aspartate + H(+). It participates in pyrimidine metabolism; UMP biosynthesis via de novo pathway; (S)-dihydroorotate from bicarbonate: step 3/3. Its function is as follows. Catalyzes the reversible cyclization of carbamoyl aspartate to dihydroorotate. The polypeptide is Dihydroorotase (Thermus aquaticus).